The chain runs to 355 residues: uncharacterized protein (355 aa).

132–139 (GPPGCGKT) contacts ATP.

This sequence belongs to the AAA ATPase family.

Its subcellular location is the mitochondrion. This is an uncharacterized protein from Schizosaccharomyces pombe (strain 972 / ATCC 24843) (Fission yeast).